The chain runs to 291 residues: Ribonuclease Z (291 aa).

7 residues coordinate Zn(2+): H61, H63, D65, H66, H133, D201, and H257. Residue D65 is the Proton acceptor of the active site.

This sequence belongs to the RNase Z family. Homodimer. It depends on Zn(2+) as a cofactor.

The enzyme catalyses Endonucleolytic cleavage of RNA, removing extra 3' nucleotides from tRNA precursor, generating 3' termini of tRNAs. A 3'-hydroxy group is left at the tRNA terminus and a 5'-phosphoryl group is left at the trailer molecule.. In terms of biological role, zinc phosphodiesterase, which displays some tRNA 3'-processing endonuclease activity. Probably involved in tRNA maturation, by removing a 3'-trailer from precursor tRNA. The chain is Ribonuclease Z from Saccharolobus solfataricus (strain ATCC 35092 / DSM 1617 / JCM 11322 / P2) (Sulfolobus solfataricus).